Reading from the N-terminus, the 688-residue chain is Pescadillo homolog (688 aa).

Residues 351 to 470 (EVASLFASFT…KLLRHDLYAP (120 aa)) enclose the BRCT domain. Disordered stretches follow at residues 411 to 442 (RPPL…GTRM) and 496 to 688 (AEQE…TKGR). Residues 412-424 (PPLPESALPPLPQ) show a composition bias toward pro residues. The stretch at 496-536 (AEQESDGEAERQAEEENEEEESEVEGLSMDKEMVETENSEA) forms a coiled coil. Composition is skewed to acidic residues over residues 510 to 519 (EENEEEESEV), 530 to 544 (ETEN…EESV), 554 to 565 (GSDDEEEESEED), and 576 to 589 (EAAD…DDEE). The segment covering 619 to 634 (KKSKKQKPLAKKHAAQ) has biased composition (basic residues). A coiled-coil region spans residues 627 to 686 (LAKKHAAQKKKEQEELERQKMMMSRKKRKLLDKMLYSNKKKDEEAEKLRRKRRKIEQGTK). The segment covering 635–646 (KKKEQEELERQK) has biased composition (basic and acidic residues).

It belongs to the pescadillo family. In terms of assembly, component of the NOP7 complex, composed of ERB1, NOP7 and YTM1. The complex is held together by ERB1, which interacts with NOP7 via its N-terminal domain and with YTM1 via a high-affinity interaction between the seven-bladed beta-propeller domains of the 2 proteins. The NOP7 complex associates with the 66S pre-ribosome.

The protein resides in the nucleus. It localises to the nucleolus. It is found in the nucleoplasm. In terms of biological role, component of the NOP7 complex, which is required for maturation of the 25S and 5.8S ribosomal RNAs and formation of the 60S ribosome. The sequence is that of Pescadillo homolog from Coccidioides immitis (strain RS) (Valley fever fungus).